A 328-amino-acid chain; its full sequence is GTP 3',8-cyclase (328 aa).

The 229-residue stretch at 1–229 folds into the Radical SAM core domain; the sequence is MNQVDYLRIS…DAQVRGAGPA (229 aa). Position 8 (Arg-8) interacts with GTP. [4Fe-4S] cluster-binding residues include Cys-15 and Cys-19. Tyr-21 provides a ligand contact to S-adenosyl-L-methionine. Cys-22 contacts [4Fe-4S] cluster. GTP is bound at residue Arg-60. Gly-64 is a binding site for S-adenosyl-L-methionine. Thr-91 lines the GTP pocket. Ser-115 contacts S-adenosyl-L-methionine. A GTP-binding site is contributed by Lys-155. Residue Met-189 coordinates S-adenosyl-L-methionine. Residues Cys-252 and Cys-255 each coordinate [4Fe-4S] cluster. Position 257-259 (257-259) interacts with GTP; sequence RMR. Cys-269 is a binding site for [4Fe-4S] cluster.

This sequence belongs to the radical SAM superfamily. MoaA family. As to quaternary structure, monomer and homodimer. Requires [4Fe-4S] cluster as cofactor.

It catalyses the reaction GTP + AH2 + S-adenosyl-L-methionine = (8S)-3',8-cyclo-7,8-dihydroguanosine 5'-triphosphate + 5'-deoxyadenosine + L-methionine + A + H(+). It participates in cofactor biosynthesis; molybdopterin biosynthesis. Catalyzes the cyclization of GTP to (8S)-3',8-cyclo-7,8-dihydroguanosine 5'-triphosphate. In Nostoc sp. (strain PCC 7120 / SAG 25.82 / UTEX 2576), this protein is GTP 3',8-cyclase.